Reading from the N-terminus, the 235-residue chain is Sugar fermentation stimulation protein homolog (235 aa).

Belongs to the SfsA family.

This is Sugar fermentation stimulation protein homolog from Alkaliphilus oremlandii (strain OhILAs) (Clostridium oremlandii (strain OhILAs)).